We begin with the raw amino-acid sequence, 189 residues long: Isopentenyl-diphosphate Delta-isomerase (189 aa).

Mn(2+)-binding residues include His-27 and His-34. Residues 32–171 enclose the Nudix hydrolase domain; the sequence is PLHFAFSTYI…PFVFSPWMVD (140 aa). Cys-69 is a catalytic residue. Mn(2+) is bound at residue His-71. Glu-89 provides a ligand contact to Mg(2+). Residues Glu-119 and Glu-121 each contribute to the Mn(2+) site. Glu-121 is a catalytic residue.

Belongs to the IPP isomerase type 1 family. Mg(2+) is required as a cofactor. Mn(2+) serves as cofactor.

It localises to the cytoplasm. The enzyme catalyses isopentenyl diphosphate = dimethylallyl diphosphate. The protein operates within isoprenoid biosynthesis; dimethylallyl diphosphate biosynthesis; dimethylallyl diphosphate from isopentenyl diphosphate: step 1/1. Its function is as follows. Catalyzes the 1,3-allylic rearrangement of the homoallylic substrate isopentenyl (IPP) to its highly electrophilic allylic isomer, dimethylallyl diphosphate (DMAPP). This is Isopentenyl-diphosphate Delta-isomerase from Corynebacterium glutamicum (strain R).